The chain runs to 126 residues: Protein ApaG (126 aa).

In terms of domain architecture, ApaG spans 2–126; sequence SDSRYKVDVS…FRLAVPGSLH (125 aa).

This chain is Protein ApaG, found in Pseudomonas syringae pv. tomato (strain ATCC BAA-871 / DC3000).